Here is a 502-residue protein sequence, read N- to C-terminus: Probable cytosol aminopeptidase (502 aa).

2 residues coordinate Mn(2+): Lys-275 and Asp-280. The active site involves Lys-287. Residues Asp-298, Asp-357, and Glu-359 each coordinate Mn(2+). The active site involves Arg-361.

Belongs to the peptidase M17 family. Requires Mn(2+) as cofactor.

It is found in the cytoplasm. The catalysed reaction is Release of an N-terminal amino acid, Xaa-|-Yaa-, in which Xaa is preferably Leu, but may be other amino acids including Pro although not Arg or Lys, and Yaa may be Pro. Amino acid amides and methyl esters are also readily hydrolyzed, but rates on arylamides are exceedingly low.. The enzyme catalyses Release of an N-terminal amino acid, preferentially leucine, but not glutamic or aspartic acids.. In terms of biological role, presumably involved in the processing and regular turnover of intracellular proteins. Catalyzes the removal of unsubstituted N-terminal amino acids from various peptides. The protein is Probable cytosol aminopeptidase of Ralstonia pickettii (strain 12J).